Reading from the N-terminus, the 448-residue chain is Homogentisate 1,2-dioxygenase (448 aa).

The active-site Proton acceptor is histidine 303. Positions 346 and 352 each coordinate Fe cation. 2 residues coordinate homogentisate: tyrosine 361 and histidine 382. A Fe cation-binding site is contributed by histidine 382.

Belongs to the homogentisate dioxygenase family. Hexamer; dimer of trimers. Fe cation is required as a cofactor.

It carries out the reaction homogentisate + O2 = 4-maleylacetoacetate + H(+). The protein operates within amino-acid degradation; L-phenylalanine degradation; acetoacetate and fumarate from L-phenylalanine: step 4/6. In terms of biological role, involved in the catabolism of homogentisate (2,5-dihydroxyphenylacetate or 2,5-OH-PhAc), a central intermediate in the degradation of phenylalanine and tyrosine. Catalyzes the oxidative ring cleavage of the aromatic ring of homogentisate to yield maleylacetoacetate. The sequence is that of Homogentisate 1,2-dioxygenase from Rhodopseudomonas palustris (strain HaA2).